We begin with the raw amino-acid sequence, 415 residues long: Serine hydroxymethyltransferase (415 aa).

Residues leucine 117 and 121 to 123 each bind (6S)-5,6,7,8-tetrahydrofolate; that span reads GHL. An N6-(pyridoxal phosphate)lysine modification is found at lysine 226.

This sequence belongs to the SHMT family. In terms of assembly, homodimer. Pyridoxal 5'-phosphate is required as a cofactor.

The protein resides in the cytoplasm. The enzyme catalyses (6R)-5,10-methylene-5,6,7,8-tetrahydrofolate + glycine + H2O = (6S)-5,6,7,8-tetrahydrofolate + L-serine. The protein operates within one-carbon metabolism; tetrahydrofolate interconversion. It participates in amino-acid biosynthesis; glycine biosynthesis; glycine from L-serine: step 1/1. Functionally, catalyzes the reversible interconversion of serine and glycine with tetrahydrofolate (THF) serving as the one-carbon carrier. This reaction serves as the major source of one-carbon groups required for the biosynthesis of purines, thymidylate, methionine, and other important biomolecules. Also exhibits THF-independent aldolase activity toward beta-hydroxyamino acids, producing glycine and aldehydes, via a retro-aldol mechanism. This chain is Serine hydroxymethyltransferase, found in Dehalococcoides mccartyi (strain ATCC BAA-2100 / JCM 16839 / KCTC 5957 / BAV1).